A 154-amino-acid chain; its full sequence is 6,7-dimethyl-8-ribityllumazine synthase (154 aa).

Residues phenylalanine 22, 56 to 58, and 81 to 83 contribute to the 5-amino-6-(D-ribitylamino)uracil site; these read AFE and VLI. Position 86-87 (86-87) interacts with (2S)-2-hydroxy-3-oxobutyl phosphate; sequence ET. Histidine 89 acts as the Proton donor in catalysis. Phenylalanine 114 contacts 5-amino-6-(D-ribitylamino)uracil. A (2S)-2-hydroxy-3-oxobutyl phosphate-binding site is contributed by arginine 128.

The protein belongs to the DMRL synthase family.

It carries out the reaction (2S)-2-hydroxy-3-oxobutyl phosphate + 5-amino-6-(D-ribitylamino)uracil = 6,7-dimethyl-8-(1-D-ribityl)lumazine + phosphate + 2 H2O + H(+). Its pathway is cofactor biosynthesis; riboflavin biosynthesis; riboflavin from 2-hydroxy-3-oxobutyl phosphate and 5-amino-6-(D-ribitylamino)uracil: step 1/2. Its function is as follows. Catalyzes the formation of 6,7-dimethyl-8-ribityllumazine by condensation of 5-amino-6-(D-ribitylamino)uracil with 3,4-dihydroxy-2-butanone 4-phosphate. This is the penultimate step in the biosynthesis of riboflavin. The chain is 6,7-dimethyl-8-ribityllumazine synthase from Chlamydia abortus (strain DSM 27085 / S26/3) (Chlamydophila abortus).